The chain runs to 209 residues: Molybdenum cofactor guanylyltransferase (209 aa).

Residues 16–18, K28, N56, D69, and D103 each bind GTP; that span reads LAG. D103 contacts Mg(2+).

It belongs to the MobA family. Monomer. Requires Mg(2+) as cofactor.

It is found in the cytoplasm. The catalysed reaction is Mo-molybdopterin + GTP + H(+) = Mo-molybdopterin guanine dinucleotide + diphosphate. Functionally, transfers a GMP moiety from GTP to Mo-molybdopterin (Mo-MPT) cofactor (Moco or molybdenum cofactor) to form Mo-molybdopterin guanine dinucleotide (Mo-MGD) cofactor. This Rhizobium johnstonii (strain DSM 114642 / LMG 32736 / 3841) (Rhizobium leguminosarum bv. viciae) protein is Molybdenum cofactor guanylyltransferase.